The following is a 556-amino-acid chain: Formate--tetrahydrofolate ligase 1 (556 aa).

Position 65–72 (65–72) interacts with ATP; it reads TPAGEGKT.

It belongs to the formate--tetrahydrofolate ligase family.

It catalyses the reaction (6S)-5,6,7,8-tetrahydrofolate + formate + ATP = (6R)-10-formyltetrahydrofolate + ADP + phosphate. Its pathway is one-carbon metabolism; tetrahydrofolate interconversion. This is Formate--tetrahydrofolate ligase 1 from Desulfitobacterium hafniense (strain Y51).